The chain runs to 173 residues: Bursicon (173 aa).

A signal peptide spans 1–32; it reads MLRHLLRHENNKVFVLILLYCVLVSILKLCTA. Disulfide bonds link Cys52–Cys101, Cys66–Cys115, Cys76–Cys136, Cys80–Cys138, and Cys98–Cys141. The CTCK domain maps to 52-142; it reads CQVTPVIHVL…PLECMCRPCT (91 aa).

In terms of assembly, heterodimer of Burs and Pburs. Expressed in one to two pairs of neurons in each of the thoracic and abdominal neuromeres of the larval CNS. Coexpressed with CCAP in most CCAP-specific neurons. Coexpressed with Pburs in four bilateral neurons in thoracic and abdominal neuromeres of the ventral nervous system.

The protein localises to the secreted. Functionally, final heterodimeric neurohormone released at the end of the molting cycle, involved in the sclerotization (tanning) of the insect cuticle, melanization and wing spreading. Heterodimer specifically activates the G protein-coupled receptor rk. The polypeptide is Bursicon (Drosophila melanogaster (Fruit fly)).